Reading from the N-terminus, the 425-residue chain is Protein UL117 (425 aa).

The tract at residues Pro59–Pro83 is disordered.

The protein belongs to the herpesviridae U84 family.

The protein resides in the host nucleus. Its function is as follows. Plays a role in the inhibition of host DNA replication in the infected cell. Targets the mini-chromosome maintenance (MCM) complex and blocks the accumulation of MCM proteins and their loading onto host chromatin. This is Protein UL117 (UL117) from Homo sapiens (Human).